Here is a 212-residue protein sequence, read N- to C-terminus: Ribonuclease HII (212 aa).

Residues T2 to Q206 form the RNase H type-2 domain. Residues D8, E9, and D101 each coordinate a divalent metal cation.

The protein belongs to the RNase HII family. Mn(2+) is required as a cofactor. Mg(2+) serves as cofactor.

The protein resides in the cytoplasm. It carries out the reaction Endonucleolytic cleavage to 5'-phosphomonoester.. Endonuclease that specifically degrades the RNA of RNA-DNA hybrids. The sequence is that of Ribonuclease HII from Natronomonas pharaonis (strain ATCC 35678 / DSM 2160 / CIP 103997 / JCM 8858 / NBRC 14720 / NCIMB 2260 / Gabara) (Halobacterium pharaonis).